We begin with the raw amino-acid sequence, 256 residues long: Cytokine-inducible SH2-containing protein (256 aa).

In terms of domain architecture, SH2 spans 81–162; sequence WYWGSITASE…PDVVSLVQHY (82 aa). The disordered stretch occupies residues 168 to 190; that stretch reads ADTRSDSPDPAPTPALPVSKPDA. An SOCS box domain is found at 207–255; that stretch reads KLVQPFVRRSSARSLQHLCRLVINRLVTDVDCLPLPRRMADYLRQYPFQ.

Stably associated with the tyrosine-phosphorylated IL3 receptor beta chain and tyrosine-phosphorylated EPO receptor (EPOR).

Its pathway is protein modification; protein ubiquitination. SOCS family proteins form part of a classical negative feedback system that regulates cytokine signal transduction. CIS is involved in the negative regulation of cytokines that signal through the JAK-STAT5 pathway such as erythropoietin, prolactin and interleukin 3 (IL3) receptor. Inhibits STAT5 trans-activation by suppressing its tyrosine phosphorylation. May be a substrate recognition component of a SCF-like ECS (Elongin BC-CUL2/5-SOCS-box protein) E3 ubiquitin-protein ligase complex which mediates the ubiquitination and subsequent proteasomal degradation of target proteins. The protein is Cytokine-inducible SH2-containing protein (Cish) of Rattus norvegicus (Rat).